Consider the following 467-residue polypeptide: Glutamate--tRNA ligase (467 aa).

Residues 9 to 19 (PSPTGFLHIGG) carry the 'HIGH' region motif. A 'KMSKS' region motif is present at residues 250-254 (KLSKR). Lys253 is an ATP binding site.

It belongs to the class-I aminoacyl-tRNA synthetase family. Glutamate--tRNA ligase type 1 subfamily. Monomer.

It localises to the cytoplasm. The enzyme catalyses tRNA(Glu) + L-glutamate + ATP = L-glutamyl-tRNA(Glu) + AMP + diphosphate. In terms of biological role, catalyzes the attachment of glutamate to tRNA(Glu) in a two-step reaction: glutamate is first activated by ATP to form Glu-AMP and then transferred to the acceptor end of tRNA(Glu). The sequence is that of Glutamate--tRNA ligase from Mesomycoplasma hyopneumoniae (strain 232) (Mycoplasma hyopneumoniae).